Reading from the N-terminus, the 344-residue chain is tRNA (guanine(26)-N(2))-dimethyltransferase (344 aa).

A Trm1 methyltransferase domain is found at 1–334 (MIVREGSAEI…ASCDLVESLM (334 aa)). Residues arginine 35, arginine 60, and glutamate 76 each contribute to the S-adenosyl-L-methionine site.

This sequence belongs to the class I-like SAM-binding methyltransferase superfamily. Trm1 family.

The catalysed reaction is guanosine(26) in tRNA + 2 S-adenosyl-L-methionine = N(2)-dimethylguanosine(26) in tRNA + 2 S-adenosyl-L-homocysteine + 2 H(+). Functionally, dimethylates a single guanine residue at position 26 of a number of tRNAs using S-adenosyl-L-methionine as donor of the methyl groups. The sequence is that of tRNA (guanine(26)-N(2))-dimethyltransferase from Thermoplasma acidophilum (strain ATCC 25905 / DSM 1728 / JCM 9062 / NBRC 15155 / AMRC-C165).